Consider the following 304-residue polypeptide: Porphobilinogen deaminase (304 aa).

C240 is subject to S-(dipyrrolylmethanemethyl)cysteine.

This sequence belongs to the HMBS family. As to quaternary structure, monomer. Dipyrromethane is required as a cofactor.

It catalyses the reaction 4 porphobilinogen + H2O = hydroxymethylbilane + 4 NH4(+). It participates in porphyrin-containing compound metabolism; protoporphyrin-IX biosynthesis; coproporphyrinogen-III from 5-aminolevulinate: step 2/4. Its function is as follows. Tetrapolymerization of the monopyrrole PBG into the hydroxymethylbilane pre-uroporphyrinogen in several discrete steps. The chain is Porphobilinogen deaminase from Xanthomonas oryzae pv. oryzae (strain MAFF 311018).